We begin with the raw amino-acid sequence, 49 residues long: Large ribosomal subunit protein bL33D (49 aa).

This sequence belongs to the bacterial ribosomal protein bL33 family.

The protein is Large ribosomal subunit protein bL33D (rpmG4) of Enterococcus faecalis (strain ATCC 700802 / V583).